The primary structure comprises 345 residues: Ferrochelatase (345 aa).

Residues His215 and Glu296 each coordinate Fe cation.

It belongs to the ferrochelatase family.

It localises to the cytoplasm. The enzyme catalyses heme b + 2 H(+) = protoporphyrin IX + Fe(2+). It functions in the pathway porphyrin-containing compound metabolism; protoheme biosynthesis; protoheme from protoporphyrin-IX: step 1/1. In terms of biological role, catalyzes the ferrous insertion into protoporphyrin IX. This chain is Ferrochelatase, found in Rhodopseudomonas palustris (strain BisB5).